The primary structure comprises 311 residues: Ribosomal RNA small subunit methyltransferase H (311 aa).

S-adenosyl-L-methionine-binding positions include 32–34 (AGH), Asp-52, Phe-79, Asp-100, and Gln-107. Residues 289–298 (SKEELEENNR) are compositionally biased toward basic and acidic residues. The segment at 289-311 (SKEELEENNRARSAKLRIAEKRK) is disordered. The span at 300 to 311 (RSAKLRIAEKRK) shows a compositional bias: basic residues.

This sequence belongs to the methyltransferase superfamily. RsmH family.

The protein resides in the cytoplasm. It carries out the reaction cytidine(1402) in 16S rRNA + S-adenosyl-L-methionine = N(4)-methylcytidine(1402) in 16S rRNA + S-adenosyl-L-homocysteine + H(+). In terms of biological role, specifically methylates the N4 position of cytidine in position 1402 (C1402) of 16S rRNA. The sequence is that of Ribosomal RNA small subunit methyltransferase H from Bacillus velezensis (strain DSM 23117 / BGSC 10A6 / LMG 26770 / FZB42) (Bacillus amyloliquefaciens subsp. plantarum).